The sequence spans 392 residues: Esterase EstB (392 aa).

Catalysis depends on Ser75, which acts as the Acyl-ester intermediate.

This sequence belongs to the class-A beta-lactamase family.

The protein localises to the cytoplasm. Strongly inhibited by eserin, NaF, HgCl2, SDS and Triton X-100. Functionally, acts on short-chain (C4-C6) fatty acid esters and triglycerides, including tertiary alcohol esters. Activity on p-nitrophenyl esters is generally higher than on o-nitrophenyl esters. Lacks beta-lactamase activity; it hydrolyzes the ester bond of cephalosporin substrates but there is no opening of the beta-lactam ring observed. In Burkholderia gladioli (Pseudomonas marginata), this protein is Esterase EstB (estB).